We begin with the raw amino-acid sequence, 224 residues long: 7-cyano-7-deazaguanine synthase (224 aa).

Residue 10–20 participates in ATP binding; the sequence is LSGGLDSATVV. Zn(2+) contacts are provided by Cys189, Cys199, Cys202, and Cys205.

This sequence belongs to the QueC family. Zn(2+) serves as cofactor.

The enzyme catalyses 7-carboxy-7-deazaguanine + NH4(+) + ATP = 7-cyano-7-deazaguanine + ADP + phosphate + H2O + H(+). It participates in purine metabolism; 7-cyano-7-deazaguanine biosynthesis. Functionally, catalyzes the ATP-dependent conversion of 7-carboxy-7-deazaguanine (CDG) to 7-cyano-7-deazaguanine (preQ(0)). In Pseudomonas putida (strain ATCC 47054 / DSM 6125 / CFBP 8728 / NCIMB 11950 / KT2440), this protein is 7-cyano-7-deazaguanine synthase.